A 476-amino-acid chain; its full sequence is ATP synthase subunit beta (476 aa).

Residue 161–168 coordinates ATP; the sequence is GGAGVGKT.

Belongs to the ATPase alpha/beta chains family. F-type ATPases have 2 components, CF(1) - the catalytic core - and CF(0) - the membrane proton channel. CF(1) has five subunits: alpha(3), beta(3), gamma(1), delta(1), epsilon(1). CF(0) has three main subunits: a(1), b(2) and c(9-12). The alpha and beta chains form an alternating ring which encloses part of the gamma chain. CF(1) is attached to CF(0) by a central stalk formed by the gamma and epsilon chains, while a peripheral stalk is formed by the delta and b chains.

It is found in the cell membrane. The catalysed reaction is ATP + H2O + 4 H(+)(in) = ADP + phosphate + 5 H(+)(out). Produces ATP from ADP in the presence of a proton gradient across the membrane. The catalytic sites are hosted primarily by the beta subunits. The protein is ATP synthase subunit beta of Mycolicibacterium gilvum (strain PYR-GCK) (Mycobacterium gilvum (strain PYR-GCK)).